Consider the following 298-residue polypeptide: Lipoyl synthase 1 (298 aa).

Positions 34, 39, 45, 60, 64, 67, and 274 each coordinate [4Fe-4S] cluster. Residues Phe-46 to Leu-263 enclose the Radical SAM core domain.

The protein belongs to the radical SAM superfamily. Lipoyl synthase family. [4Fe-4S] cluster serves as cofactor.

It is found in the cytoplasm. It carries out the reaction [[Fe-S] cluster scaffold protein carrying a second [4Fe-4S](2+) cluster] + N(6)-octanoyl-L-lysyl-[protein] + 2 oxidized [2Fe-2S]-[ferredoxin] + 2 S-adenosyl-L-methionine + 4 H(+) = [[Fe-S] cluster scaffold protein] + N(6)-[(R)-dihydrolipoyl]-L-lysyl-[protein] + 4 Fe(3+) + 2 hydrogen sulfide + 2 5'-deoxyadenosine + 2 L-methionine + 2 reduced [2Fe-2S]-[ferredoxin]. Its pathway is protein modification; protein lipoylation via endogenous pathway; protein N(6)-(lipoyl)lysine from octanoyl-[acyl-carrier-protein]: step 2/2. In terms of biological role, catalyzes the radical-mediated insertion of two sulfur atoms into the C-6 and C-8 positions of the octanoyl moiety bound to the lipoyl domains of lipoate-dependent enzymes, thereby converting the octanoylated domains into lipoylated derivatives. The polypeptide is Lipoyl synthase 1 (Thermosynechococcus vestitus (strain NIES-2133 / IAM M-273 / BP-1)).